Consider the following 698-residue polypeptide: Iron-sulfur clusters transporter ATM1, mitochondrial (698 aa).

A mitochondrion-targeting transit peptide spans 1–23 (MIPQLLQRSSRACPRYNPALYRL). At 24-113 (STTSQQRPGL…PKDDWGTKLR (90 aa)) the chain is on the mitochondrial matrix side. The segment at 32 to 63 (GLTQTFWTSAPRREQPRTPTDSKPTTTKPSAV) is disordered. Over residues 48–61 (RTPTDSKPTTTKPS) the composition is skewed to low complexity. The helical transmembrane segment at 114 to 135 (VSLAVSLLIGAKVLNVQVPFYF) threads the bilayer. The ABC transmembrane type-1 domain occupies 114–404 (VSLAVSLLIG…LGSVYRELRQ (291 aa)). Topologically, residues 136–158 (KSIVDSMNIDVAAVGGTATTVAG) are mitochondrial intermembrane. The helical transmembrane segment at 159–182 (AMILAYGASRIGATVFQELRNAVF) threads the bilayer. Topologically, residues 183–231 (ASVAQNAIRKVACNVFDHLLRLDLTFHLSKQTGGLTRALDRGTKGISFI) are mitochondrial matrix. The helical transmembrane segment at 232–255 (LSSMVFHVLPTALEISMVCGILTY) threads the bilayer. Residue Asn-256 is a topological domain, mitochondrial intermembrane. Residues 257-277 (YGAKFAALTVLTMVSYTAFTI) form a helical membrane-spanning segment. Residues 278-343 (WTTAWRTKFR…NSIKVATSLA (66 aa)) are Mitochondrial matrix-facing. Glutathione-binding positions include 283–287 (RTKFR) and 346–349 (NSGQ). Residues 344-362 (LLNSGQNIIFSSALTGMMY) traverse the membrane as a helical segment. Over 363-377 (LAANGVAEGTLTVGD) the chain is Mitochondrial intermembrane. A helical membrane pass occupies residues 378-399 (LVMVNQLVFQLSVPLNFLGSVY). Residue Gly-396 participates in glutathione binding. Residues 400-698 (RELRQSLLDM…EEENDEQKKN (299 aa)) are Mitochondrial matrix-facing. The ABC transporter domain maps to 439–675 (IKFENVNFAY…DGVYAELWSA (237 aa)). ATP is bound by residues Tyr-448 and 472–483 (GPSGCGKSTLLR). Positions 679 to 698 (MFGEDGKEKSEEENDEQKKN) are disordered. A compositionally biased stretch (basic and acidic residues) spans 682–698 (EDGKEKSEEENDEQKKN).

Belongs to the ABC transporter superfamily. ABCB family. Heavy Metal importer (TC 3.A.1.210) subfamily. In terms of assembly, homodimer.

Its subcellular location is the mitochondrion inner membrane. Its function is as follows. Performs an essential function in the generation of cytoplasmic iron-sulfur proteins by mediating the ATP-dependent export of Fe/S cluster precursors synthesized by NFS1 and other mitochondrial proteins. Hydrolyzes ATP. Binds glutathione and may function by transporting a glutathione-conjugated iron-sulfur compound. The protein is Iron-sulfur clusters transporter ATM1, mitochondrial of Gibberella zeae (strain ATCC MYA-4620 / CBS 123657 / FGSC 9075 / NRRL 31084 / PH-1) (Wheat head blight fungus).